The following is a 297-amino-acid chain: Protein LRATD1 (297 aa).

S38 carries the post-translational modification Phosphoserine. One can recognise an LRAT domain in the interval 138 to 233 (PAPEPPAPAP…CRFGKREFKA (96 aa)).

The protein belongs to the LRATD family.

It localises to the cytoplasm. May play a role in cell morphology and motility. This is Protein LRATD1 (LRATD1) from Bos taurus (Bovine).